Here is a 107-residue protein sequence, read N- to C-terminus: Biphenyl 2,3-dioxygenase, ferredoxin component (107 aa).

A Rieske domain is found at Thr4–Val99. 4 residues coordinate [2Fe-2S] cluster: Cys43, His45, Cys62, and His65.

The protein belongs to the bacterial ring-hydroxylating dioxygenase ferredoxin component family. The multicomponent biphenyl dioxygenase system is composed of a ferredoxin reductase (BphA4), a ferredoxin (BphA3), and a terminal oxygenase (BphA1A2). It depends on [2Fe-2S] cluster as a cofactor.

It functions in the pathway xenobiotic degradation; biphenyl degradation. Functionally, ferredoxin component of the biphenyl dioxygenase system that catalyzes the stereospecific dihydroxylation of the aromatic ring of biphenyl, yielding a dihydrodiol compound. Is likely involved in biphenyl degradation that allows growth of Rhodococcus sp. strain RHA1 on biphenyl as the sole source of carbon and energy. The dioxygenase system can also use naphtalene and 4-chlorobiphenyl (4-CB) as substrates, as well as some polychlorinated biphenyls (PCB) such as 2,2'-dichlorobiphenyl, 2,3-dichlorobiphenyl and 2,5,2'-trichlorobiphenyl. It exhibits weak activity toward dibenzofuran and dibenzo-p-dioxin. Electrons are transferred from NADH to the [2Fe-2S] cluster in BphA1 via FAD of BphA4 and [2Fe-2S] cluster of BphA3. The protein is Biphenyl 2,3-dioxygenase, ferredoxin component of Rhodococcus jostii (strain RHA1).